Consider the following 142-residue polypeptide: MKTFTAKPETVKRDWYVVDATGKTLGRLATELARRLRGKHKAEYTPHVDTGDYIIVLNAEKVAVTGNKRSDKMYYHHTGHIGGIKEATFEEMIARRPERVIEIAVKGMLPKGPLGRAMYRKLKVYAGNEHNHAAQQPQVLDI.

The protein belongs to the universal ribosomal protein uL13 family. Part of the 50S ribosomal subunit.

In terms of biological role, this protein is one of the early assembly proteins of the 50S ribosomal subunit, although it is not seen to bind rRNA by itself. It is important during the early stages of 50S assembly. This Cronobacter sakazakii (strain ATCC BAA-894) (Enterobacter sakazakii) protein is Large ribosomal subunit protein uL13.